We begin with the raw amino-acid sequence, 737 residues long: DNA polymerase iota (737 aa).

The UmuC domain occupies 17–231 (IIHLDMDYFY…GDLKRVTGIG (215 aa)). Position 21 (aspartate 21) interacts with Mg(2+). 2 residues coordinate a 2'-deoxyribonucleoside 5'-triphosphate: tyrosine 26 and arginine 58. Aspartate 113 provides a ligand contact to Mg(2+). Glutamate 114 is an active-site residue. 2 DNA-binding regions span residues 212–277 (TYAE…FGRD) and 288–413 (KTIG…SKFQ). Disordered stretches follow at residues 443 to 464 (TSLTSPTAESPTSDECAFRSSP), 482 to 515 (SPVPMLLDNGSESAATNSDFSDFSETEVEPSPKK), 557 to 581 (DSEKDFPMSTTPSTSTSAPAPRFRT), and 607 to 643 (LSSNASSTASSPLPSPMDDSIAMSAPSTTTLPFPSPT). The segment covering 491 to 502 (GSESAATNSDFS) has biased composition (polar residues). 3 stretches are compositionally biased toward low complexity: residues 563 to 577 (PMSTTPSTSTSAPAP), 607 to 618 (LSSNASSTASSP), and 632 to 643 (PSTTTLPFPSPT). The short motif at 669–686 (VDAEVFKELPVELQTELI) is the Ubiquitin-binding (UBM) element.

The protein belongs to the DNA polymerase type-Y family. The cofactor is Mg(2+). Mn(2+) is required as a cofactor.

Its subcellular location is the nucleus. The catalysed reaction is DNA(n) + a 2'-deoxyribonucleoside 5'-triphosphate = DNA(n+1) + diphosphate. Its function is as follows. Error-prone DNA polymerase specifically involved in DNA repair. Plays an important role in translesion synthesis, where the normal high-fidelity DNA polymerases cannot proceed and DNA synthesis stalls. Favors Hoogsteen base-pairing in the active site. Inserts the correct base with higher fidelity opposite an adenosine template. Exhibits low fidelity and efficiency opposite a thymidine template, where it will preferentially insert guanosine. Forms a Schiff base with 5'-deoxyribose phosphate at abasic sites, but may not have lyase activity. The polypeptide is DNA polymerase iota (Drosophila melanogaster (Fruit fly)).